We begin with the raw amino-acid sequence, 1224 residues long: Serine/threonine-protein kinase CST20 (1224 aa).

Residues 1 to 18 (MSILSENNPTPTSITDPN) show a composition bias toward polar residues. Disordered stretches follow at residues 1 to 378 (MSIL…TAHN) and 403 to 464 (TNSS…HSQE). Composition is skewed to low complexity over residues 57 to 70 (NTTS…SLGS) and 95 to 119 (DSGS…NPES). Residues 144 to 155 (HQGDDSDNEKQY) are compositionally biased toward basic and acidic residues. Polar residues-rich tracts occupy residues 169-191 (DSYS…NNVS), 201-218 (TSSL…NENA), and 231-240 (PTSKTSSFHD). Residues 242-251 (SSVISSSTSV) show a composition bias toward low complexity. Polar residues-rich tracts occupy residues 256–271 (SNPT…SYKS) and 305–324 (DTLS…TLQG). Low complexity-rich tracts occupy residues 343 to 375 (NTSA…STST) and 433 to 462 (KVRG…NSHS). Residues 469 to 482 (ISTPFNAKHLAHVG) enclose the CRIB domain. 2 disordered regions span residues 539–825 (FHFD…ALAD) and 861–913 (LREK…KQAA). Positions 544 to 555 (NKSSSSGWSNEN) are enriched in polar residues. Residues 564-575 (SNSGSGSGGGGA) are compositionally biased toward gly residues. Positions 598-607 (ITPSQSMPTK) are enriched in polar residues. A compositionally biased stretch (basic and acidic residues) spans 608–622 (TESKQSENQHPHEDN). Over residues 623 to 636 (ATQYTPRTPTSHVQ) the composition is skewed to polar residues. Composition is skewed to low complexity over residues 664 to 677 (PSSQ…SQSD), 690 to 704 (SPSK…SKSL), and 730 to 743 (SIPK…SLSS). Residues 744–755 (QLRPATNGSTTA) show a composition bias toward polar residues. Residues 783–801 (APPPPPSAPPAPPVPPAPP) are compositionally biased toward pro residues. A compositionally biased stretch (polar residues) spans 805–820 (LSEQTSEIPQQRTAPS). The segment covering 861-870 (LREKNERQNR) has biased composition (basic and acidic residues). Polar residues predominate over residues 871–886 (QQETGQNNADTASGGS). The region spanning 947-1199 (YVDLVKIGQG…ADELLHDNFI (253 aa)) is the Protein kinase domain. Residues 953–961 (IGQGASGGV) and K977 contribute to the ATP site. D1067 serves as the catalytic Proton acceptor.

It belongs to the protein kinase superfamily. STE Ser/Thr protein kinase family. STE20 subfamily.

It is found in the cytoplasm. Its subcellular location is the nucleus. It catalyses the reaction L-seryl-[protein] + ATP = O-phospho-L-seryl-[protein] + ADP + H(+). The catalysed reaction is L-threonyl-[protein] + ATP = O-phospho-L-threonyl-[protein] + ADP + H(+). MAP4K component of the MAPK pathway required for the mating pheromone response, and the regulation of cell polarity and cell cycle. Phosphorylates histone H2B to form H2BS10ph. Required for hyphal formation and virulence. The protein is Serine/threonine-protein kinase CST20 (CST20) of Candida albicans (strain WO-1) (Yeast).